The chain runs to 491 residues: Probable glycine dehydrogenase (decarboxylating) subunit 2 (491 aa).

Lysine 273 is modified (N6-(pyridoxal phosphate)lysine).

The protein belongs to the GcvP family. C-terminal subunit subfamily. In terms of assembly, the glycine cleavage system is composed of four proteins: P, T, L and H. In this organism, the P 'protein' is a heterodimer of two subunits. Pyridoxal 5'-phosphate is required as a cofactor.

It carries out the reaction N(6)-[(R)-lipoyl]-L-lysyl-[glycine-cleavage complex H protein] + glycine + H(+) = N(6)-[(R)-S(8)-aminomethyldihydrolipoyl]-L-lysyl-[glycine-cleavage complex H protein] + CO2. Functionally, the glycine cleavage system catalyzes the degradation of glycine. The P protein binds the alpha-amino group of glycine through its pyridoxal phosphate cofactor; CO(2) is released and the remaining methylamine moiety is then transferred to the lipoamide cofactor of the H protein. The sequence is that of Probable glycine dehydrogenase (decarboxylating) subunit 2 from Bacillus velezensis (strain DSM 23117 / BGSC 10A6 / LMG 26770 / FZB42) (Bacillus amyloliquefaciens subsp. plantarum).